Reading from the N-terminus, the 88-residue chain is Small ribosomal subunit protein bS20 (88 aa).

Residues 1-20 (MANTKSARKSLIKSKQQRKC) form a disordered region.

The protein belongs to the bacterial ribosomal protein bS20 family.

Functionally, binds directly to 16S ribosomal RNA. In Blochmanniella pennsylvanica (strain BPEN), this protein is Small ribosomal subunit protein bS20.